Here is a 327-residue protein sequence, read N- to C-terminus: ABC transporter periplasmic-binding protein YphF (327 aa).

Positions 1–26 are cleaved as a signal peptide; that stretch reads MPTKMRTTRNLLLMATLLGSALFARA.

Belongs to the bacterial solute-binding protein 2 family.

The protein resides in the periplasm. In terms of biological role, probably part of the binding-protein-dependent transport system YphDEF. The protein is ABC transporter periplasmic-binding protein YphF (yphF) of Escherichia coli (strain K12).